Here is a 388-residue protein sequence, read N- to C-terminus: Succinate--CoA ligase [ADP-forming] subunit beta (388 aa).

Positions K9–R244 constitute an ATP-grasp domain. ATP contacts are provided by residues K46, G53 to G55, E99, T102, and E107. Positions 199 and 213 each coordinate Mg(2+). Substrate-binding positions include N264 and G321–V323.

Belongs to the succinate/malate CoA ligase beta subunit family. Heterotetramer of two alpha and two beta subunits. It depends on Mg(2+) as a cofactor.

The enzyme catalyses succinate + ATP + CoA = succinyl-CoA + ADP + phosphate. It catalyses the reaction GTP + succinate + CoA = succinyl-CoA + GDP + phosphate. It participates in carbohydrate metabolism; tricarboxylic acid cycle; succinate from succinyl-CoA (ligase route): step 1/1. Functionally, succinyl-CoA synthetase functions in the citric acid cycle (TCA), coupling the hydrolysis of succinyl-CoA to the synthesis of either ATP or GTP and thus represents the only step of substrate-level phosphorylation in the TCA. The beta subunit provides nucleotide specificity of the enzyme and binds the substrate succinate, while the binding sites for coenzyme A and phosphate are found in the alpha subunit. The polypeptide is Succinate--CoA ligase [ADP-forming] subunit beta (Serratia proteamaculans (strain 568)).